Here is a 341-residue protein sequence, read N- to C-terminus: Paired box protein Pax-9 (341 aa).

Residues 4–130 (AFGEVNQLGG…SSISRILRNK (127 aa)) constitute a DNA-binding region (paired). The interval 7-63 (EVNQLGGVFVNGRPLPNAIRLRIVELAQLGIRPCDISRQLRVSHGCVSKILARYNET) is PAI subdomain. The interval 82-130 (TVVKHIRTYKQRDPGIFAWEIRDRLLADGVCDKYNVPSVSSISRILRNK) is RED subdomain. An interaction with KDM5B region spans residues 168-189 (AAAAKVPTPPGVPAIPGSVAMP).

Interacts with KDM5B.

It is found in the nucleus. Functionally, transcription factor required for normal development of thymus, parathyroid glands, ultimobranchial bodies, teeth, skeletal elements of skull and larynx as well as distal limbs. The chain is Paired box protein Pax-9 (PAX9) from Macaca mulatta (Rhesus macaque).